A 383-amino-acid polypeptide reads, in one-letter code: Putative glutamate--cysteine ligase 2-2 (383 aa).

This sequence belongs to the glutamate--cysteine ligase type 2 family. YbdK subfamily.

The enzyme catalyses L-cysteine + L-glutamate + ATP = gamma-L-glutamyl-L-cysteine + ADP + phosphate + H(+). Functionally, ATP-dependent carboxylate-amine ligase which exhibits weak glutamate--cysteine ligase activity. The polypeptide is Putative glutamate--cysteine ligase 2-2 (Legionella pneumophila (strain Paris)).